The following is a 128-amino-acid chain: Nascent polypeptide-associated complex protein (128 aa).

In terms of domain architecture, NAC-A/B spans P8–E75.

The protein belongs to the NAC-alpha family. Homodimer. Interacts with the ribosome. Binds ribosomal RNA.

Contacts the emerging nascent chain on the ribosome. This Methanocaldococcus jannaschii (strain ATCC 43067 / DSM 2661 / JAL-1 / JCM 10045 / NBRC 100440) (Methanococcus jannaschii) protein is Nascent polypeptide-associated complex protein.